A 204-amino-acid polypeptide reads, in one-letter code: Pyrrolidone-carboxylate peptidase (204 aa).

Residues E80, C142, and H165 contribute to the active site.

It belongs to the peptidase C15 family. Homotetramer.

It localises to the cytoplasm. It carries out the reaction Release of an N-terminal pyroglutamyl group from a polypeptide, the second amino acid generally not being Pro.. In terms of biological role, removes 5-oxoproline from various penultimate amino acid residues except L-proline. This is Pyrrolidone-carboxylate peptidase from Lysinibacillus sphaericus (strain C3-41).